The chain runs to 842 residues: Outer membrane usher protein AggC (842 aa).

A signal peptide spans 1–21 (MKTSSFIIVILLCFRIENVIA). C819 and C841 are joined by a disulfide.

This sequence belongs to the fimbrial export usher family.

It localises to the cell outer membrane. Its function is as follows. Involved in the export and assembly of the AAF/I fimbriae subunits across the outer membrane. The chain is Outer membrane usher protein AggC (aggC) from Escherichia coli.